Reading from the N-terminus, the 335-residue chain is Anthranilate phosphoribosyltransferase (335 aa).

Residues glycine 79, 82-83, serine 87, 89-92, 107-115, and serine 119 each bind 5-phospho-alpha-D-ribose 1-diphosphate; these read GD, NIST, and KHGNRSITS. Position 79 (glycine 79) interacts with anthranilate. Serine 91 provides a ligand contact to Mg(2+). Position 110 (asparagine 110) interacts with anthranilate. Residue arginine 165 coordinates anthranilate. Mg(2+)-binding residues include aspartate 224 and glutamate 225.

The protein belongs to the anthranilate phosphoribosyltransferase family. Homodimer. The cofactor is Mg(2+).

It catalyses the reaction N-(5-phospho-beta-D-ribosyl)anthranilate + diphosphate = 5-phospho-alpha-D-ribose 1-diphosphate + anthranilate. The protein operates within amino-acid biosynthesis; L-tryptophan biosynthesis; L-tryptophan from chorismate: step 2/5. Functionally, catalyzes the transfer of the phosphoribosyl group of 5-phosphorylribose-1-pyrophosphate (PRPP) to anthranilate to yield N-(5'-phosphoribosyl)-anthranilate (PRA). This chain is Anthranilate phosphoribosyltransferase, found in Lactococcus lactis subsp. cremoris (strain MG1363).